The following is a 212-amino-acid chain: RNA chaperone ProQ (212 aa).

2 stretches are compositionally biased toward basic and acidic residues: residues 102 to 124 (ALKESKERVFASRRTNTKEEKAK) and 132 to 144 (RKADAAAKSDKPK). The segment at 102 to 149 (ALKESKERVFASRRTNTKEEKAKQPRRPAPRKADAAAKSDKPKAAPKA) is disordered.

This sequence belongs to the ProQ family.

Its subcellular location is the cytoplasm. Its function is as follows. RNA chaperone with significant RNA binding, RNA strand exchange and RNA duplexing activities. This Aeromonas hydrophila subsp. hydrophila (strain ATCC 7966 / DSM 30187 / BCRC 13018 / CCUG 14551 / JCM 1027 / KCTC 2358 / NCIMB 9240 / NCTC 8049) protein is RNA chaperone ProQ.